A 191-amino-acid chain; its full sequence is Elongation factor P-like protein (191 aa).

It belongs to the elongation factor P family.

The protein is Elongation factor P-like protein of Shewanella sediminis (strain HAW-EB3).